Reading from the N-terminus, the 492-residue chain is Monocarboxylate transporter 3 (492 aa).

The Cytoplasmic segment spans residues 1 to 14 (MGAGGPRRGAGPPD). The chain crosses the membrane as a helical span at residues 15 to 35 (GGWGWVVLGACFVVTGFAYGF). Over 36 to 58 (PKAVSVFFRELKRDFGAGYSDTA) the chain is Extracellular. The chain crosses the membrane as a helical span at residues 59–79 (WVSSIMLAMLYGTGPLSSILV). At 80–85 (TRFGCR) the chain is on the cytoplasmic side. A helical transmembrane segment spans residues 86-106 (PVMLAGGLLASAGMILASFAS). Residues 107 to 115 (RLVELYLTA) lie on the Extracellular side of the membrane. The helical transmembrane segment at 116-136 (GVLTGLGLALNFQPSLIMLGL) threads the bilayer. Residues 137–146 (YFERRRPLAN) are Cytoplasmic-facing. A helical transmembrane segment spans residues 147 to 167 (GLAAAGSPVFLSMLSPLGQLL). Over 168–172 (GERFG) the chain is Extracellular. The chain crosses the membrane as a helical span at residues 173 to 193 (WRGGFLLFGGLLLHCCACGAV). The Cytoplasmic portion of the chain corresponds to 194–228 (MRPPPGPPPRRDPSPHGGPARRRRLLDVAVCTDRA). Residues 229 to 249 (FVVYVVTKFLMALGLFVPAIL) form a helical membrane-spanning segment. Residues 250-257 (LVNYAKDA) lie on the Extracellular side of the membrane. A helical transmembrane segment spans residues 258–278 (GVPDAEAAFLLSIVGFVDIVA). Topologically, residues 279–293 (RPACGALAGLGRLRP) are cytoplasmic. The chain crosses the membrane as a helical span at residues 294–314 (HVPYLFSLALLANGLTDLISA). At 315 to 318 (RARS) the chain is on the extracellular side. The helical transmembrane segment at 319 to 339 (YGTLVAFCIAFGLSYGMVGAL) threads the bilayer. Residues 340–352 (QFEVLMATVGAPR) lie on the Cytoplasmic side of the membrane. A helical membrane pass occupies residues 353–373 (FPSALGLVLLVEAVAVLIGPP). Residues 374–386 (SAGRLVDALKNYE) lie on the Extracellular side of the membrane. Residues 387-407 (IIFYLAGSEVALAGVFMAVTT) traverse the membrane as a helical segment. Residues 408–492 (YCCLRCSKNI…GGHEARGQKA (85 aa)) are Cytoplasmic-facing. Positions 419 to 492 (SGRSAEGGAS…GGHEARGQKA (74 aa)) are disordered. Basolateral sorting signal regions lie at residues 426-460 (GASD…VLSP) and 461-482 (RAGS…HESI). Positions 476–492 (ELDHESIGGHEARGQKA) are enriched in basic and acidic residues.

It belongs to the major facilitator superfamily. Monocarboxylate porter (TC 2.A.1.13) family. In terms of tissue distribution, expressed exclusively in retinal pigment epithelium and choroid plexus epithelium.

The protein localises to the basolateral cell membrane. It catalyses the reaction (S)-lactate(in) + H(+)(in) = (S)-lactate(out) + H(+)(out). Its function is as follows. Probable retinal pigment epithelium (RPE)-specific proton-coupled L-lactate transporter. May facilitate transport of lactate and H(+) out of the retina and could therefore play an essential role in maintenance of metabolic and ionic homeostasis of the outer retina. The chain is Monocarboxylate transporter 3 (Slc16a8) from Mus musculus (Mouse).